The chain runs to 816 residues: Mechanosensitive cation channel TMEM63B (816 aa).

The Extracellular portion of the chain corresponds to 1-46; that stretch reads MLPYVIATLGSAGSTCKASTCSNSTKDYCYSARIRSTVLQGLPFGG. The chain crosses the membrane as a helical span at residues 47 to 71; that stretch reads VPTVLALDFMCFLALLFVFSILRKV. Residues cysteine 57 and cysteine 119 are each lipidated (S-palmitoyl cysteine). Residues 72–138 lie on the Cytoplasmic side of the membrane; that stretch reads AWDYGRLALV…KDDEIRDKCG (67 aa). Residues 139 to 171 traverse the membrane as a helical segment; it reads GDAVHYLSFQRHIIGLLVAVGVLSVGIVLPVNF. Residues 172–195 are Extracellular-facing; sequence SGDLLENNAYSFGRTTIANLNSGN. Residues 196–220 traverse the membrane as a helical segment; the sequence is NLLWLHTSFAFLYLLLTVYSMRRHT. At 221–420 the chain is on the cytoplasmic side; it reads SKMRYKEDDL…IYWEHLSIRG (200 aa). Residues 224–419 are intracellular linker IL2; confers mechanosensitivity; the sequence is RYKEDDLVKR…NIYWEHLSIR (196 aa). 2 S-palmitoyl cysteine lipidation sites follow: cysteine 375 and cysteine 391. Residues 421–450 form a helical membrane-spanning segment; it reads FIWWIRCLVINVVLFILLFFLTTPAIIITT. Over 451–465 the chain is Extracellular; that stretch reads MDKFNVTKPVEYLNN. The helical transmembrane segment at 466–495 threads the bilayer; sequence PIITQFFPTLLLWCFSALLPTIVYYSAFFE. Residues 496–499 are Cytoplasmic-facing; that stretch reads AHWT. A helical membrane pass occupies residues 500-536; the sequence is RSGENRTTMHKCYTFLIFMVLLLPSLGLSSLDVFFRW. The Extracellular portion of the chain corresponds to 537 to 559; that stretch reads LFDKKFLAEAAVRFECVFLPDNG. A helical transmembrane segment spans residues 560–592; it reads AFFVNYVIASAFIGNAMDLLRIPGLLMYMIRLC. A gating helix region spans residues 560 to 592; it reads AFFVNYVIASAFIGNAMDLLRIPGLLMYMIRLC. At 593-612 the chain is on the cytoplasmic side; sequence LARSAAERRNVKRHQAYEFQ. A helical transmembrane segment spans residues 613–631; the sequence is FGAAYAWMMCVFTVVMTYS. Over 632-634 the chain is Extracellular; it reads ITC. A helical transmembrane segment spans residues 635–659; that stretch reads PIIVPFGLMYMLLKHLVDRYNLYYA. Residues 660–666 are Cytoplasmic-facing; that stretch reads YLPAKLD. A helical transmembrane segment spans residues 667-695; the sequence is KKIHSGAVNQVVAAPILCLFWLLFFSTMR. The Extracellular segment spans residues 696–700; sequence TGFLA. A helical transmembrane segment spans residues 701-721; that stretch reads PTSMFTFVVLVITIVICLCHV. 2 S-palmitoyl cysteine lipidation sites follow: cysteine 719 and cysteine 722. Residues 722–816 are Cytoplasmic-facing; sequence CFGHFKYLSA…DSLIENEIRQ (95 aa).

This sequence belongs to the CSC1 (TC 1.A.17) family. In terms of assembly, monomer. Post-translationally, palmitoylation is required for localization to the plasma membrane and stability.

Its subcellular location is the cell membrane. The protein localises to the lysosome membrane. It is found in the early endosome membrane. It catalyses the reaction Ca(2+)(in) = Ca(2+)(out). The catalysed reaction is Mg(2+)(in) = Mg(2+)(out). It carries out the reaction K(+)(in) = K(+)(out). The enzyme catalyses Na(+)(in) = Na(+)(out). It catalyses the reaction Cs(+)(in) = Cs(+)(out). Its function is as follows. Mechanosensitive cation channel with low conductance and high activation threshold. Osmosensitive cation channel preferentially activated by hypotonic stress. Also acts as a phospholipid scramblase in response to changes in membrane structure: upon changes in membrane curvature and thickness, alters its conformation and translocates phospholipids, thereby controlling plasma membrane lipid distribution. In Gallus gallus (Chicken), this protein is Mechanosensitive cation channel TMEM63B.